The chain runs to 131 residues: M-zodatoxin-Lt8m (131 aa).

The signal sequence occupies residues 1-20 (MKYFVVALALVAAFACIAES). The propeptide occupies 21–60 (KPAESEHELAEVEEENELADLEDAVWLEHLADLSDLEEAR).

The protein belongs to the cationic peptide 06 (cytoinsectotoxin) family. Expressed by the venom gland.

It localises to the secreted. Its function is as follows. Insecticidal, cytolytic and antimicrobial peptide. Forms voltage-dependent, ion-permeable channels in membranes. At high concentration causes cell membrane lysis. The polypeptide is M-zodatoxin-Lt8m (cit 1-13) (Lachesana tarabaevi (Spider)).